The following is a 185-amino-acid chain: Ribosome-recycling factor (185 aa).

It belongs to the RRF family.

The protein localises to the cytoplasm. Its function is as follows. Responsible for the release of ribosomes from messenger RNA at the termination of protein biosynthesis. May increase the efficiency of translation by recycling ribosomes from one round of translation to another. The sequence is that of Ribosome-recycling factor from Clostridium kluyveri (strain NBRC 12016).